A 294-amino-acid chain; its full sequence is Cutinase (294 aa).

Residues 1–33 (MLRARPSHRLASAAAVVAATGAALLAGSSPAAA) form the signal peptide. Cysteines 36 and 107 form a disulfide. The active-site Nucleophile is the S118. C180 and C187 are oxidised to a cystine. D184 is an active-site residue. H198 functions as the Proton donor/acceptor in the catalytic mechanism. The interval 222–241 (GTPTTPTPTPTPTPVPTTCV) is disordered. Residues 226-236 (TPTPTPTPTPV) are compositionally biased toward pro residues. Residues 240-294 (CVRDSTRDHVAADRAVSLYGRAYARGSRDSLGATSSYNVVSLQQVEGGWRLVTAC) form a may be involved in substrate binding region.

Belongs to the cutinase family.

It is found in the secreted. The enzyme catalyses cutin + H2O = cutin monomers.. It catalyses the reaction a tetradecanoate ester + H2O = an aliphatic alcohol + tetradecanoate + H(+). The catalysed reaction is hexadecanoate ester + H2O = an aliphatic alcohol + hexadecanoate + H(+). It carries out the reaction a butanoate ester + H2O = an aliphatic alcohol + butanoate + H(+). The enzyme catalyses an octanoate ester + H2O = an aliphatic alcohol + octanoate + H(+). Its function is as follows. Catalyzes the hydrolysis of cutin, a polyester that forms the structure of plant cuticle. Shows esterase activity towards p-nitrophenol-linked aliphatic esters (pNP-aliphatic esters). Can depolymerize synthetic polyesters such as poly(epsilon-caprolactone) (PCL) and poly(1,3-propylene adipate) (PPA). Exhibits some activity on poly(lactic acid) (PLA). Can bind but not hydrolyze poly(hydroxybutyrate) (PHB). The chain is Cutinase from Kineococcus radiotolerans (strain ATCC BAA-149 / DSM 14245 / SRS30216).